Reading from the N-terminus, the 345-residue chain is Aspartate--ammonia ligase (345 aa).

It belongs to the class-II aminoacyl-tRNA synthetase family. AsnA subfamily.

The protein localises to the cytoplasm. It catalyses the reaction L-aspartate + NH4(+) + ATP = L-asparagine + AMP + diphosphate + H(+). The protein operates within amino-acid biosynthesis; L-asparagine biosynthesis; L-asparagine from L-aspartate (ammonia route): step 1/1. The protein is Aspartate--ammonia ligase of Bacteroides thetaiotaomicron (strain ATCC 29148 / DSM 2079 / JCM 5827 / CCUG 10774 / NCTC 10582 / VPI-5482 / E50).